A 98-amino-acid chain; its full sequence is Minor capsid protein P13 (98 aa).

Residues 3 to 23 (KITPFLIAAVVAVIVLAVWLF) are hydrophobic.

Interacts with the major capsid protein.

The protein localises to the virion. Its function is as follows. One of the minor capsid proteins that constitute a network internal to the major capsid proteins and outside the lipid membrane. The minor capsid protein P13 does not serve a cross-linking function between neighboring capsomers, it may play a role in the viral capsid assembly. This Chlorella (PBCV-1) protein is Minor capsid protein P13.